The primary structure comprises 123 residues: Putative iron-sulfur cluster insertion protein ErpA (123 aa).

Iron-sulfur cluster is bound by residues cysteine 51, cysteine 115, and cysteine 117.

This sequence belongs to the HesB/IscA family. As to quaternary structure, homodimer. Iron-sulfur cluster is required as a cofactor.

Its function is as follows. Required for insertion of 4Fe-4S clusters. In Bordetella bronchiseptica (strain ATCC BAA-588 / NCTC 13252 / RB50) (Alcaligenes bronchisepticus), this protein is Putative iron-sulfur cluster insertion protein ErpA.